Reading from the N-terminus, the 568-residue chain is Sphingosine-1-phosphate lyase 1 (568 aa).

At 1 to 40 the chain is on the lumenal side; that stretch reads MPGTDLLKLKDFEPYLEILESYSTKAKNYVNGYCTKYEPW. Residues 41–61 traverse the membrane as a helical; Signal-anchor for type III membrane protein segment; the sequence is QLIAWSVLCTLLIVWVYELIF. Residues 62-568 lie on the Cytoplasmic side of the membrane; sequence QPESLWSRFK…NQMNGSPKPR (507 aa). The residue at position 353 (lysine 353) is an N6-(pyridoxal phosphate)lysine; alternate. The residue at position 353 (lysine 353) is an N6-acetyllysine; alternate. A 3'-nitrotyrosine mark is found at tyrosine 356 and tyrosine 366. Position 564 is a phosphoserine (serine 564).

It belongs to the group II decarboxylase family. Sphingosine-1-phosphate lyase subfamily. The cofactor is pyridoxal 5'-phosphate. Highest levels are found in liver, small intestine and thymus, followed by kidney, lung, heart, spleen and brain (at protein level). Also detected in stomach, testis and skeletal muscle (at protein level).

It localises to the endoplasmic reticulum membrane. The enzyme catalyses sphinganine 1-phosphate = hexadecanal + phosphoethanolamine. The catalysed reaction is sphing-4-enine 1-phosphate = (2E)-hexadecenal + phosphoethanolamine. It participates in lipid metabolism; sphingolipid metabolism. Functionally, cleaves phosphorylated sphingoid bases (PSBs), such as sphingosine-1-phosphate, into fatty aldehydes and phosphoethanolamine. Elevates stress-induced ceramide production and apoptosis. Required for global lipid homeostasis in liver and cholesterol homeostasis in fibroblasts. Involved in the regulation of pro-inflammatory response and neutrophil trafficking. Modulates neuronal autophagy via phosphoethanolamine production which regulates accumulation of aggregate-prone proteins such as APP. Seems to play a role in establishing neuronal contact sites and axonal maintenance. The chain is Sphingosine-1-phosphate lyase 1 from Mus musculus (Mouse).